Consider the following 504-residue polypeptide: Cytochrome P450 2K4 (504 aa).

A heme-binding site is contributed by Cys447.

This sequence belongs to the cytochrome P450 family. Requires heme as cofactor.

The protein localises to the endoplasmic reticulum membrane. It localises to the microsome membrane. It carries out the reaction an organic molecule + reduced [NADPH--hemoprotein reductase] + O2 = an alcohol + oxidized [NADPH--hemoprotein reductase] + H2O + H(+). This is Cytochrome P450 2K4 (cyp2k4) from Oncorhynchus mykiss (Rainbow trout).